We begin with the raw amino-acid sequence, 876 residues long: Translation initiation factor IF-2 (876 aa).

The region spanning 378 to 547 (TRPPIITIMG…LTQSEMLELK (170 aa)) is the tr-type G domain. The G1 stretch occupies residues 387 to 394 (GHVDHGKT). 387 to 394 (GHVDHGKT) contributes to the GTP binding site. Positions 412-416 (RITQH) are G2. The G3 stretch occupies residues 433–436 (DTPG). GTP contacts are provided by residues 433–437 (DTPGH) and 487–490 (NKID). Residues 487-490 (NKID) form a G4 region. The interval 523-525 (SAK) is G5.

It belongs to the TRAFAC class translation factor GTPase superfamily. Classic translation factor GTPase family. IF-2 subfamily.

The protein resides in the cytoplasm. Functionally, one of the essential components for the initiation of protein synthesis. Protects formylmethionyl-tRNA from spontaneous hydrolysis and promotes its binding to the 30S ribosomal subunits. Also involved in the hydrolysis of GTP during the formation of the 70S ribosomal complex. In Buchnera aphidicola subsp. Baizongia pistaciae (strain Bp), this protein is Translation initiation factor IF-2.